The sequence spans 323 residues: Arginase (323 aa).

Mn(2+) contacts are provided by histidine 119, aspartate 142, histidine 144, and aspartate 146. Substrate-binding positions include 144-148 (HADIN), 155-157 (SKN), and aspartate 198. Residues aspartate 247 and aspartate 249 each coordinate Mn(2+). Positions 261 and 292 each coordinate substrate.

This sequence belongs to the arginase family. Homotrimer. The cofactor is Mn(2+).

It carries out the reaction L-arginine + H2O = urea + L-ornithine. Its pathway is nitrogen metabolism; urea cycle; L-ornithine and urea from L-arginine: step 1/1. This Schizosaccharomyces pombe (strain 972 / ATCC 24843) (Fission yeast) protein is Arginase (aru1).